Here is a 105-residue protein sequence, read N- to C-terminus: Small ribosomal subunit protein bS18 (105 aa).

The tract at residues 1–34 is disordered; that stretch reads MMINKEQDLNQLETNQEQSVEQNQTDEKRKPKPN. Residues 9–23 show a composition bias toward polar residues; that stretch reads LNQLETNQEQSVEQN.

Belongs to the bacterial ribosomal protein bS18 family. As to quaternary structure, part of the 30S ribosomal subunit. Forms a tight heterodimer with protein bS6.

Binds as a heterodimer with protein bS6 to the central domain of the 16S rRNA, where it helps stabilize the platform of the 30S subunit. In Mycoplasma genitalium (strain ATCC 33530 / DSM 19775 / NCTC 10195 / G37) (Mycoplasmoides genitalium), this protein is Small ribosomal subunit protein bS18.